Consider the following 226-residue polypeptide: Putative type II restriction enzyme MjaVIP (226 aa).

It belongs to the BsaWI type II restriction endonuclease family.

The enzyme catalyses Endonucleolytic cleavage of DNA to give specific double-stranded fragments with terminal 5'-phosphates.. A P subtype restriction enzyme that recognizes the double-stranded sequence 5'-CCGG-3'; the cleavage site is unknown. In Methanocaldococcus jannaschii (strain ATCC 43067 / DSM 2661 / JAL-1 / JCM 10045 / NBRC 100440) (Methanococcus jannaschii), this protein is Putative type II restriction enzyme MjaVIP (mjaVIRP).